The sequence spans 115 residues: Non-specific lipid-transfer protein 4.3 (115 aa).

The signal sequence occupies residues 1–25 (MARAAATQLVLVAMVAAMLLVATDA). 4 disulfides stabilise this stretch: Cys29/Cys77, Cys39/Cys54, Cys55/Cys97, and Cys75/Cys111.

It belongs to the plant LTP family.

Its function is as follows. Plant non-specific lipid-transfer proteins transfer phospholipids as well as galactolipids across membranes. May play a role in wax or cutin deposition in the cell walls of expanding epidermal cells and certain secretory tissues. The chain is Non-specific lipid-transfer protein 4.3 (LTP4.3) from Hordeum vulgare (Barley).